The chain runs to 286 residues: Homoserine kinase (286 aa).

An ATP-binding site is contributed by 78–88; it reads PLARGLGSSSS.

Belongs to the GHMP kinase family. Homoserine kinase subfamily.

It localises to the cytoplasm. The enzyme catalyses L-homoserine + ATP = O-phospho-L-homoserine + ADP + H(+). It functions in the pathway amino-acid biosynthesis; L-threonine biosynthesis; L-threonine from L-aspartate: step 4/5. Functionally, catalyzes the ATP-dependent phosphorylation of L-homoserine to L-homoserine phosphate. The chain is Homoserine kinase from Streptococcus equi subsp. zooepidemicus (strain H70).